An 815-amino-acid chain; its full sequence is MANQAESSDSKGTKKDFSTAILEKKKAANRLVVDEAINDDNSVVSLHPDTMEKLQLFRGDTILIKGKKRKDTVCIALADETCDEPKIRMNKVVRSNLRVRLGDVISVHQCPDVKYGNRVHILPLDDTIEGVSGNIFDAYLKPYFLEAYRPVRKGDLFLVRGGMRSIEFKVIETDPAEYCVVAPDTEIFCEGEPIKREDEERLDEVGYDDVGGVRKQMAQIRELVELPLRHPQLFKSIGVKPPKGILLYGPPGSGKTLIARAVANETGAFFFCINGPEIMSKLAGESESNLRKAFEEAEKNAPSIIFIDEIDSIAPKREKTHGEVERRIVSQLLTLMDGLKSRAHVIVMGATNRPNSIDPALRRFGRFDREIDIGVPDEIGRLEVLRIHTKNMKLAEDVDLERVSKDTHGYVGADLAALCTEAALQCIREKMDVIDLDDEEIDAEILNSMAVSNDHFQTALGNSNPSALRETVVEVPNVSWEDIGGLENVKRELQETVQYPVEHPEKFEKFGMSPSKGVLFYGPPGCGKTLLAKAIANECQANFISIKGPELLTMWFGESEANVREIFDKARQSAPCVLFFDELDSIATQRGNSVGDAGGAADRVLNQLLTEMDGMNAKKTVFIIGATNRPDIIDPALLRPGRLDQLIYIPLPDEESRYQIFKSCLRKSPVAKDVDLRALAKYTQGFSGADITEICQRSCKYAIRENIEKDIEKERKRAESPEAMEEDEEEIAEIKAGHFEESMKYARRSVSDADIRKYQAFAQTLQQSRGFGSEFRFPDAPTGTTGAFPGAAATVGGVDPFATSGGAADDDDLYS.

Ala2 carries the post-translational modification N-acetylalanine. Ser42 carries the post-translational modification Phosphoserine. ATP contacts are provided by residues 249-256 and 522-529; these read GPPGSGKT and GPPGCGKT. A Phosphoserine modification is found at Ser720. The interval 772 to 815 is disordered; sequence GSEFRFPDAPTGTTGAFPGAAATVGGVDPFATSGGAADDDDLYS. Over residues 780–798 the composition is skewed to low complexity; that stretch reads APTGTTGAFPGAAATVGGV.

This sequence belongs to the AAA ATPase family.

Its subcellular location is the nucleus. It localises to the cytoplasm. The protein localises to the cytoskeleton. It is found in the phragmoplast. In terms of biological role, probably functions in cell division and growth processes. Interacts with certain SNAREs as part of specialized membrane fusion events where vesicles from the same organelle fuse (homotypic fusion). This chain is Cell division control protein 48 homolog D (CDC48D), found in Arabidopsis thaliana (Mouse-ear cress).